Here is a 1356-residue protein sequence, read N- to C-terminus: Kinesin-like protein KIF24 (1356 aa).

An SAM domain is found at 1 to 64 (MASWLYECLC…FQLIKIIKIM (64 aa)). Residues 93-119 (GPRRQLHFDSPSASKDKMANNETGSLS) form a disordered region. Phosphoserine is present on Ser102. Positions 218-541 (KIRVCVRKRP…LRYADRVKEL (324 aa)) constitute a Kinesin motor domain. Residue 308–315 (GQTGAGKT) coordinates ATP. Residue Ser473 is modified to Phosphoserine. An interaction with MPHOSPH9 region spans residues 473 to 702 (SLLALKECIR…PTRGKKVQPV (230 aa)). The segment covering 552–571 (TSQNQTSANASPKRIQSSPV) has biased composition (polar residues). Disordered stretches follow at residues 552–581 (TSQN…CSPK), 597–664 (PTKV…LCSE), 788–840 (EGRL…STAL), 897–947 (RGAL…HQKP), and 964–998 (VPEQ…DQRD). At Ser579 the chain carries Phosphoserine. Thr615 is subject to Phosphothreonine; by NEK2. Ser616 carries the post-translational modification Phosphoserine; by NEK2. Residues Ser640, Ser817, and Ser820 each carry the phosphoserine modification. Positions 640–653 (SPRKGTTRSGHSIK) are enriched in basic residues. The segment covering 810 to 821 (QAEDLDDSDFSE) has biased composition (acidic residues). Polar residues predominate over residues 830–840 (QPAMKQGSTAL). Residues 970 to 979 (GSLSSPSPEN) are compositionally biased toward polar residues. At Ser1008 the chain carries Phosphoserine. Positions 1109 to 1140 (LSSSPPDNRPSGDLPALSPSPIHQHSPDKLPG) are disordered.

The protein belongs to the TRAFAC class myosin-kinesin ATPase superfamily. Kinesin family. Interacts with CCP110, CEP97, TALPID3. Interacts with MPHOSPH9. As to expression, expressed in brain, spinal cord, and small intestine.

Its subcellular location is the cytoplasm. The protein resides in the cytoskeleton. It is found in the microtubule organizing center. It localises to the centrosome. The protein localises to the centriole. Its function is as follows. Microtubule-dependent motor protein that acts as a negative regulator of ciliogenesis by mediating recruitment of CCP110 to mother centriole in cycling cells, leading to restrict nucleation of cilia at centrioles. Mediates depolymerization of microtubules of centriolar origin, possibly to suppress aberrant cilia formation. Following activation by NEK2 involved in disassembly of primary cilium during G2/M phase but does not disassemble fully formed ciliary axonemes. As cilium assembly and disassembly is proposed to coexist in a dynamic equilibrium may suppress nascent cilium assembly and, potentially, ciliar re-assembly in cells that have already disassembled their cilia ensuring the completion of cilium removal in the later stages of the cell cycle. Plays an important role in recruiting MPHOSPH9, a negative regulator of cilia formation to the distal end of mother centriole. The protein is Kinesin-like protein KIF24 (Kif24) of Mus musculus (Mouse).